Consider the following 245-residue polypeptide: 1-(5-phosphoribosyl)-5-[(5-phosphoribosylamino)methylideneamino] imidazole-4-carboxamide isomerase (245 aa).

The active-site Proton acceptor is D8. Residue D131 is the Proton donor of the active site.

This sequence belongs to the HisA/HisF family.

The protein resides in the cytoplasm. It catalyses the reaction 1-(5-phospho-beta-D-ribosyl)-5-[(5-phospho-beta-D-ribosylamino)methylideneamino]imidazole-4-carboxamide = 5-[(5-phospho-1-deoxy-D-ribulos-1-ylimino)methylamino]-1-(5-phospho-beta-D-ribosyl)imidazole-4-carboxamide. Its pathway is amino-acid biosynthesis; L-histidine biosynthesis; L-histidine from 5-phospho-alpha-D-ribose 1-diphosphate: step 4/9. The sequence is that of 1-(5-phosphoribosyl)-5-[(5-phosphoribosylamino)methylideneamino] imidazole-4-carboxamide isomerase from Neisseria meningitidis serogroup C (strain 053442).